The following is a 192-amino-acid chain: Fe/S biogenesis protein NfuA (192 aa).

Residues cysteine 150 and cysteine 153 each coordinate [4Fe-4S] cluster.

It belongs to the NfuA family. Homodimer. Requires [4Fe-4S] cluster as cofactor.

Involved in iron-sulfur cluster biogenesis. Binds a 4Fe-4S cluster, can transfer this cluster to apoproteins, and thereby intervenes in the maturation of Fe/S proteins. Could also act as a scaffold/chaperone for damaged Fe/S proteins. The chain is Fe/S biogenesis protein NfuA from Buchnera aphidicola subsp. Acyrthosiphon pisum (strain 5A).